The following is a 113-amino-acid chain: Putative anti-sigma factor antagonist TM_1081 (113 aa).

The 110-residue stretch at 1-110 (MFPYKIVDDV…DTISEAMEEV (110 aa)) folds into the STAS domain. A Phosphoserine modification is found at Ser-55.

It belongs to the anti-sigma-factor antagonist family. Post-translationally, phosphorylated on a serine residue.

In terms of biological role, in the phosphorylated form it could act as an anti-anti-sigma factor that counteracts an anti-sigma factor and thus releases a sigma factor from inhibition. This Thermotoga maritima (strain ATCC 43589 / DSM 3109 / JCM 10099 / NBRC 100826 / MSB8) protein is Putative anti-sigma factor antagonist TM_1081.